Here is a 426-residue protein sequence, read N- to C-terminus: Multifunctional protein ADE2 (426 aa).

An SAICAR synthetase region spans residues 1 to 261; that stretch reads MAPAASELKL…WVAERVELLL (261 aa). Positions 262–426 are AIR carboxylase; sequence KTKSQGRVVV…ADKKLRECTL (165 aa).

It in the N-terminal section; belongs to the SAICAR synthetase family. In the C-terminal section; belongs to the AIR carboxylase family. Class II subfamily. In terms of assembly, homooctamer.

The enzyme catalyses 5-amino-1-(5-phospho-D-ribosyl)imidazole-4-carboxylate + L-aspartate + ATP = (2S)-2-[5-amino-1-(5-phospho-beta-D-ribosyl)imidazole-4-carboxamido]succinate + ADP + phosphate + 2 H(+). The catalysed reaction is 5-amino-1-(5-phospho-D-ribosyl)imidazole-4-carboxylate + H(+) = 5-amino-1-(5-phospho-beta-D-ribosyl)imidazole + CO2. It participates in purine metabolism; IMP biosynthesis via de novo pathway; 5-amino-1-(5-phospho-D-ribosyl)imidazole-4-carboxamide from 5-amino-1-(5-phospho-D-ribosyl)imidazole-4-carboxylate: step 1/2. It functions in the pathway purine metabolism; IMP biosynthesis via de novo pathway; 5-amino-1-(5-phospho-D-ribosyl)imidazole-4-carboxylate from 5-amino-1-(5-phospho-D-ribosyl)imidazole (carboxylase route): step 1/1. The polypeptide is Multifunctional protein ADE2 (AIRC) (Gallus gallus (Chicken)).